The sequence spans 390 residues: Nucleosome assembly protein 1-like 1 (390 aa).

Over residues M1 to S10 the composition is skewed to basic and acidic residues. Residues M1–K32 are disordered. Position 2 is an N-acetylalanine (A2). Phosphoserine is present on S10. Residues E11–G28 show a composition bias toward acidic residues. Phosphothreonine occurs at positions 62 and 64. Position 69 is a phosphoserine (S69). K116 is modified (N6-acetyllysine). The NAP1L motif signature appears at Y125–A150. Residues E131–S143 show a composition bias toward acidic residues. The disordered stretch occupies residues E131–D163. Position 143 is a phosphoserine (S143). Residues E144–D163 are compositionally biased toward basic and acidic residues. Positions I272–H278 match the Nuclear localization signal motif. The span at A345–D375 shows a compositional bias: acidic residues. Residues A345–Q390 are disordered. A 5-glutamyl polyglycine mark is found at E358 and E359. The segment covering Y376–Q390 has biased composition (basic and acidic residues). At C387 the chain carries Cysteine methyl ester. A lipid anchor (S-farnesyl cysteine) is attached at C387. The propeptide at K388 to Q390 is removed in mature form.

It belongs to the nucleosome assembly protein (NAP) family. Homodimer. The dimer binds strongly and sequentially to single and double H2A-H2B heterodimers. Interacts with ERCC6; this interaction increases ERCC6 processivity. Interacts with RAD54. Interacts with SETD1A. In terms of processing, polyglycylated by TTLL10 on glutamate residues, resulting in polyglycine chains on the gamma-carboxyl group. Both polyglutamylation and polyglycylation modifications can coexist on the same protein on adjacent residues, and lowering polyglycylation levels increases polyglutamylation, and reciprocally. Polyglutamylated by TTLL4 on glutamate residues, resulting in polyglutamate chains on the gamma-carboxyl group. Both polyglutamylation and polyglycylation modifications can coexist on the same protein on adjacent residues, and lowering polyglycylation levels increases polyglutamylation, and reciprocally.

The protein resides in the nucleus. The protein localises to the melanosome. It is found in the cytoplasm. Histone chaperone that plays a role in the nuclear import of H2A-H2B and nucleosome assembly. Also participates in several important DNA repair mechanisms: greatly enhances ERCC6-mediated chromatin remodeling which is essential for transcription-coupled nucleotide excision DNA repair. Also stimulates homologous recombination (HR) by RAD51 and RAD54 which is essential in mitotic DNA double strand break (DSB) repair. Plays a key role in the regulation of embryonic neurogenesis. Promotes the proliferation of neural progenitors and inhibits neuronal differentiation during cortical development. Regulates neurogenesis via the modulation of RASSF10; regulates RASSF10 expression by promoting SETD1A-mediated H3K4 methylation at the RASSF10 promoter. This chain is Nucleosome assembly protein 1-like 1 (Nap1l1), found in Rattus norvegicus (Rat).